Consider the following 985-residue polypeptide: DNA ligase 4 (985 aa).

Disordered stretches follow at residues 1–27 (MDRLNNVGGETERELDEKYPNRPRNKH) and 43–70 (LNGNKKRPTGPAAARKKLGPHGGQQTLS). Over residues 10–20 (ETERELDEKYP) the composition is skewed to basic and acidic residues. Residues 46 to 61 (NKKRPTGPAAARKKLG) show a composition bias toward basic residues. ATP-binding residues include Glu310, Lys312, Leu313, Arg317, Glu379, Phe420, Glu480, Lys485, Lys502, and Lys504. Lys312 serves as the catalytic N6-AMP-lysine intermediate. A Mg(2+)-binding site is contributed by Glu379. Position 480 (Glu480) interacts with Mg(2+). 2 consecutive BRCT domains span residues 711-804 (PSGH…PDLL) and 878-983 (LRGW…RFAP).

This sequence belongs to the ATP-dependent DNA ligase family. It depends on Mg(2+) as a cofactor.

The protein localises to the nucleus. It catalyses the reaction ATP + (deoxyribonucleotide)n-3'-hydroxyl + 5'-phospho-(deoxyribonucleotide)m = (deoxyribonucleotide)n+m + AMP + diphosphate.. Functionally, DNA ligase involved in DNA non-homologous end joining (NHEJ); required for double-strand break (DSB) repair. This is DNA ligase 4 (LIG4) from Coccidioides immitis (strain RS) (Valley fever fungus).